A 142-amino-acid chain; its full sequence is Hemoglobin subunit zeta (142 aa).

Residue Ser-2 is modified to N-acetylserine. Residues 2-142 enclose the Globin domain; that stretch reads SLMKNERAII…LSSILTEKYR (141 aa). Phosphothreonine is present on Thr-29. A Phosphoserine modification is found at Ser-53. A heme b-binding site is contributed by His-59. At Ser-73 the chain carries Phosphoserine. His-88 is a heme b binding site.

This sequence belongs to the globin family. In terms of assembly, heterotetramer of two zeta chains and beta-type chains.

In terms of biological role, the zeta chain is an alpha-type chain of mammalian embryonic hemoglobin. The polypeptide is Hemoglobin subunit zeta (Hbz) (Mus musculus (Mouse)).